The chain runs to 777 residues: B3 domain-containing protein REM-like 1 (777 aa).

Residues 97 to 193 (FVTFTLAPVD…TPVLSLCFEE (97 aa)) constitute a DNA-binding region (TF-B3 1). Disordered regions lie at residues 200-248 (VGEE…TSPS) and 344-391 (KSSS…ESSS). Basic and acidic residues predominate over residues 218–243 (KIVKDDNNKDESSTWKREGNHLRCKD). Residues 252–347 (TLTVTITPDS…TPVLSIKSSS (96 aa)) constitute a DNA-binding region (TF-B3 2). Residues 344–368 (KSSSGKGQSEFSKESLSIKPSSGNM) show a composition bias toward polar residues. Over residues 370–388 (KKVENNREASRKYPPRSRE) the composition is skewed to basic and acidic residues. DNA-binding regions (TF-B3) lie at residues 582 to 676 (FLTL…RDSS) and 683 to 777 (FLTL…FYTK).

The protein localises to the nucleus. This is B3 domain-containing protein REM-like 1 from Arabidopsis thaliana (Mouse-ear cress).